Reading from the N-terminus, the 220-residue chain is Aklanonic acid methyltransferase DauC (220 aa).

Belongs to the methyltransferase superfamily. DnrC family. As to quaternary structure, homodimer.

It carries out the reaction aklanonate + S-adenosyl-L-methionine = methyl aklanonate + S-adenosyl-L-homocysteine. Its pathway is antibiotic biosynthesis; daunorubicin biosynthesis. It participates in antibiotic biosynthesis; carminomycin biosynthesis. The protein operates within antibiotic biosynthesis; rhodomycin biosynthesis. It functions in the pathway antibiotic biosynthesis; aclacinomycin biosynthesis. Functionally, involved in the biosynthesis of aklavinone which is an important precursor common to the formation of the clinically significant anthracyclines such as carminomycin, daunorubicin (daunomycin), rhodomycin, aclacinomycin T (aklavin) and aclacinomycin A (aclarubicin). These compounds are aromatic polyketide antibiotics that exhibit high cytotoxicity and are widely applied in the chemotherapy of a variety of cancers. Catalyzes the methyl esterification of aklanonic acid to yield aklanonic acid methyl ester. The protein is Aklanonic acid methyltransferase DauC (dauC) of Streptomyces sp. (strain C5).